We begin with the raw amino-acid sequence, 193 residues long: Large ribosomal subunit protein bL25 (193 aa).

The protein belongs to the bacterial ribosomal protein bL25 family. CTC subfamily. Part of the 50S ribosomal subunit; part of the 5S rRNA/L5/L18/L25 subcomplex. Contacts the 5S rRNA. Binds to the 5S rRNA independently of L5 and L18.

Functionally, this is one of the proteins that binds to the 5S RNA in the ribosome where it forms part of the central protuberance. The polypeptide is Large ribosomal subunit protein bL25 (Oleidesulfovibrio alaskensis (strain ATCC BAA-1058 / DSM 17464 / G20) (Desulfovibrio alaskensis)).